The chain runs to 332 residues: Ethylene-responsive transcription factor ERF119 (332 aa).

A disordered region spans residues 1–33 (MAERKKRSSIQTNKPNKKPMKKKPFQLNHLPGL). The segment covering 15-24 (PNKKPMKKKP) has biased composition (basic residues). Positions 130–187 (KPVGVRQRKWGKWAAEIRHPITKVRTWLGTYETLEQAADAYATKKLEFDALAAATSAA) form a DNA-binding region, AP2/ERF.

It belongs to the AP2/ERF transcription factor family. ERF subfamily.

Its subcellular location is the nucleus. In terms of biological role, probably acts as a transcriptional activator. Binds to the GCC-box pathogenesis-related promoter element. May be involved in the regulation of gene expression by stress factors and by components of stress signal transduction pathways. The chain is Ethylene-responsive transcription factor ERF119 (ERF119) from Arabidopsis thaliana (Mouse-ear cress).